The sequence spans 172 residues: NAD(P)H-quinone oxidoreductase subunit I, chloroplastic (172 aa).

2 consecutive 4Fe-4S ferredoxin-type domains span residues 55–84 (GRIH…VDWK) and 95–124 (LNYS…MTEE). C64, C67, C70, C74, C104, C107, C110, and C114 together coordinate [4Fe-4S] cluster.

The protein belongs to the complex I 23 kDa subunit family. NDH is composed of at least 16 different subunits, 5 of which are encoded in the nucleus. The cofactor is [4Fe-4S] cluster.

The protein resides in the plastid. Its subcellular location is the chloroplast thylakoid membrane. The catalysed reaction is a plastoquinone + NADH + (n+1) H(+)(in) = a plastoquinol + NAD(+) + n H(+)(out). The enzyme catalyses a plastoquinone + NADPH + (n+1) H(+)(in) = a plastoquinol + NADP(+) + n H(+)(out). Its function is as follows. NDH shuttles electrons from NAD(P)H:plastoquinone, via FMN and iron-sulfur (Fe-S) centers, to quinones in the photosynthetic chain and possibly in a chloroplast respiratory chain. The immediate electron acceptor for the enzyme in this species is believed to be plastoquinone. Couples the redox reaction to proton translocation, and thus conserves the redox energy in a proton gradient. In Arabidopsis thaliana (Mouse-ear cress), this protein is NAD(P)H-quinone oxidoreductase subunit I, chloroplastic.